The chain runs to 107 residues: U1-lycotoxin-Ls1b (107 aa).

A signal peptide spans 1 to 20 (MMKALVVVALLVTLISYSSS). A propeptide spanning residues 21-41 (EGIDDLEADELLSLMANEQTR) is cleaved from the precursor. Cystine bridges form between C44–C59, C51–C68, C58–C86, and C70–C84.

This sequence belongs to the neurotoxin 19 (CSTX) family. 04 (U1-Lctx) subfamily. Expressed by the venom gland.

It localises to the secreted. This chain is U1-lycotoxin-Ls1b, found in Lycosa singoriensis (Wolf spider).